A 309-amino-acid polypeptide reads, in one-letter code: Tagatose-6-phosphate kinase (309 aa).

The protein belongs to the carbohydrate kinase PfkB family. LacC subfamily.

It carries out the reaction D-tagatofuranose 6-phosphate + ATP = D-tagatofuranose 1,6-bisphosphate + ADP + H(+). It functions in the pathway carbohydrate metabolism; D-tagatose 6-phosphate degradation; D-glyceraldehyde 3-phosphate and glycerone phosphate from D-tagatose 6-phosphate: step 1/2. This is Tagatose-6-phosphate kinase from Streptococcus pneumoniae (strain P1031).